The primary structure comprises 233 residues: Urease accessory protein UreF (233 aa).

Belongs to the UreF family. In terms of assembly, ureD, UreF and UreG form a complex that acts as a GTP-hydrolysis-dependent molecular chaperone, activating the urease apoprotein by helping to assemble the nickel containing metallocenter of UreC. The UreE protein probably delivers the nickel.

The protein localises to the cytoplasm. In terms of biological role, required for maturation of urease via the functional incorporation of the urease nickel metallocenter. The polypeptide is Urease accessory protein UreF (Polaromonas sp. (strain JS666 / ATCC BAA-500)).